We begin with the raw amino-acid sequence, 627 residues long: Monoterpene synthase like 1, chloroplastic (627 aa).

Residues 1 to 50 constitute a chloroplast transit peptide; sequence MDLISVLPSTSKSCVCMHKPLSSSTHKLKPFCRTIRILGMPRPRKSVLMA. Positions 378, 382, and 530 each coordinate Mg(2+). The DDXXD motif signature appears at 378-382; sequence DDMYD.

This sequence belongs to the terpene synthase family. Tpsd subfamily. The cofactor is Mg(2+). Requires Mn(2+) as cofactor.

The protein resides in the plastid. Its subcellular location is the chloroplast. The protein operates within terpene metabolism; oleoresin biosynthesis. It functions in the pathway secondary metabolite biosynthesis; terpenoid biosynthesis. In terms of biological role, monoterpene synthase (TPS) involved in the biosynthesis of monoterpene natural products included in conifer oleoresin secretions and volatile emissions; these compounds contribute to biotic and abiotic stress defense against herbivores and pathogens. The chain is Monoterpene synthase like 1, chloroplastic from Pinus contorta (Shore pine).